We begin with the raw amino-acid sequence, 183 residues long: Translation initiation factor IF-3 (183 aa).

The segment covering 1–13 (MKQPDRNQQQGAK) has biased composition (polar residues). The interval 1–21 (MKQPDRNQQQGAKSNRPAIND) is disordered.

Belongs to the IF-3 family. As to quaternary structure, monomer.

The protein localises to the cytoplasm. IF-3 binds to the 30S ribosomal subunit and shifts the equilibrium between 70S ribosomes and their 50S and 30S subunits in favor of the free subunits, thus enhancing the availability of 30S subunits on which protein synthesis initiation begins. This chain is Translation initiation factor IF-3, found in Acinetobacter baumannii (strain AYE).